The following is a 171-amino-acid chain: uncharacterized protein (171 aa).

2 disordered regions span residues 1–41 and 114–147; these read MDAV…SKPK and DSLG…RPKR. Residues 27–38 are compositionally biased toward low complexity; it reads AQQQQGPSAQGS. Polar residues predominate over residues 116 to 125; it reads LGNTASSSSM.

This is an uncharacterized protein from Mus musculus (Mouse).